We begin with the raw amino-acid sequence, 368 residues long: Aspartate-semialdehyde dehydrogenase (368 aa).

Residues 10 to 13, 37 to 38, and Gln74 contribute to the NADP(+) site; these read RGMV and TS. Arg103 is a phosphate binding site. Cys136 (acyl-thioester intermediate) is an active-site residue. Cys136 bears the S-cysteinyl cysteine; in inhibited form mark. Substrate is bound at residue Gln163. NADP(+)-binding positions include 166-167 and Pro194; that span reads SG. Glu242 contacts substrate. Lys245 lines the phosphate pocket. Arg268 contacts substrate. His275 (proton acceptor) is an active-site residue. Gln351 contributes to the NADP(+) binding site.

The protein belongs to the aspartate-semialdehyde dehydrogenase family. As to quaternary structure, homodimer.

The catalysed reaction is L-aspartate 4-semialdehyde + phosphate + NADP(+) = 4-phospho-L-aspartate + NADPH + H(+). It participates in amino-acid biosynthesis; L-lysine biosynthesis via DAP pathway; (S)-tetrahydrodipicolinate from L-aspartate: step 2/4. Its pathway is amino-acid biosynthesis; L-methionine biosynthesis via de novo pathway; L-homoserine from L-aspartate: step 2/3. The protein operates within amino-acid biosynthesis; L-threonine biosynthesis; L-threonine from L-aspartate: step 2/5. Catalyzes the NADPH-dependent formation of L-aspartate-semialdehyde (L-ASA) by the reductive dephosphorylation of L-aspartyl-4-phosphate. The chain is Aspartate-semialdehyde dehydrogenase from Salmonella typhi.